The following is a 542-amino-acid chain: Tubby-related protein 1 (542 aa).

The interval 1 to 289 (MPLRDETLRE…RAPSPPVEVD (289 aa)) is disordered. Residues 91 to 104 (FLRDPEAKKRDPRE) show a composition bias toward basic and acidic residues. Acidic residues predominate over residues 114–132 (AEDEEEEEEEDEEDEEEEA). Basic and acidic residues predominate over residues 146-157 (PLREKSSADLKE). The span at 262–275 (SNQKGKAKGKGKKK) shows a compositional bias: basic residues.

It belongs to the TUB family. In terms of assembly, homodimer. May interact with ABCF1, PSIP1, ZEB1 and HMGB2 (Potential). Interacts with DNM1. Interacts with F-actin. Interacts with TUB. Interacts with TYRO3. In terms of tissue distribution, retina-specific.

It is found in the cytoplasm. The protein localises to the cell membrane. Its subcellular location is the secreted. It localises to the synapse. In terms of biological role, required for normal development of photoreceptor synapses. Required for normal photoreceptor function and for long-term survival of photoreceptor cells. Interacts with cytoskeleton proteins and may play a role in protein transport in photoreceptor cells. Binds lipids, especially phosphatidylinositol 3-phosphate, phosphatidylinositol 4-phosphate, phosphatidylinositol 5-phosphate, phosphatidylinositol 3,4-bisphosphate, phosphatidylinositol 4,5-bisphosphate, phosphatidylinositol 3,4,5-bisphosphate, phosphatidylserine and phosphatidic acid (in vitro). Contribute to stimulation of phagocytosis of apoptotic retinal pigment epithelium (RPE) cells and macrophages. In Homo sapiens (Human), this protein is Tubby-related protein 1 (TULP1).